A 305-amino-acid polypeptide reads, in one-letter code: Ribosomal RNA small subunit methyltransferase H (305 aa).

S-adenosyl-L-methionine-binding positions include 47 to 49, Asp66, Phe93, Asp108, and Gln115; that span reads GGH. The interval 279–305 is disordered; the sequence is ADSNEKLNNPRSRSAKLRLAKKRNPNE. Positions 291 to 305 are enriched in basic residues; sequence RSAKLRLAKKRNPNE.

The protein belongs to the methyltransferase superfamily. RsmH family.

It localises to the cytoplasm. It catalyses the reaction cytidine(1402) in 16S rRNA + S-adenosyl-L-methionine = N(4)-methylcytidine(1402) in 16S rRNA + S-adenosyl-L-homocysteine + H(+). In terms of biological role, specifically methylates the N4 position of cytidine in position 1402 (C1402) of 16S rRNA. This Prochlorococcus marinus (strain SARG / CCMP1375 / SS120) protein is Ribosomal RNA small subunit methyltransferase H.